Consider the following 158-residue polypeptide: NAD(P)H-quinone oxidoreductase subunit J, chloroplastic (158 aa).

The protein belongs to the complex I 30 kDa subunit family. In terms of assembly, NDH is composed of at least 16 different subunits, 5 of which are encoded in the nucleus.

Its subcellular location is the plastid. The protein localises to the chloroplast thylakoid membrane. The enzyme catalyses a plastoquinone + NADH + (n+1) H(+)(in) = a plastoquinol + NAD(+) + n H(+)(out). It carries out the reaction a plastoquinone + NADPH + (n+1) H(+)(in) = a plastoquinol + NADP(+) + n H(+)(out). Functionally, NDH shuttles electrons from NAD(P)H:plastoquinone, via FMN and iron-sulfur (Fe-S) centers, to quinones in the photosynthetic chain and possibly in a chloroplast respiratory chain. The immediate electron acceptor for the enzyme in this species is believed to be plastoquinone. Couples the redox reaction to proton translocation, and thus conserves the redox energy in a proton gradient. The polypeptide is NAD(P)H-quinone oxidoreductase subunit J, chloroplastic (Spinacia oleracea (Spinach)).